The chain runs to 235 residues: Eukaryotic translation initiation factor 4E-1 (235 aa).

Positions 1–16 are enriched in basic and acidic residues; it reads MAVEDTPKSVVTEEAK. The segment at 1 to 59 is disordered; sequence MAVEDTPKSVVTEEAKPNSIENPIDRYHEEGDDAEEGEIAGGEGDGNVDESSKSGVPES. 2 EIF4G-binding regions span residues 60–63 and 70–106; these read HPLE and FDNPAVKSKQTSWGSSLRPVFTFSTVEEFWSLYNNMK. MRNA contacts are provided by residues 78–83, lysine 110, and 128–129; these read KQTSWG and WE. An intrachain disulfide couples cysteine 133 to cysteine 171. Residues 154 to 163 are EIF4G-binding; it reads YTLLALIGEQ. Residues 178–183 and 223–227 each bind mRNA; these read RGKQER and KKLDR.

Belongs to the eukaryotic initiation factor 4E family. EIF4F is a multi-subunit complex, the composition of which varies with external and internal environmental conditions. It is composed of at least EIF4A, EIF4E and EIF4G. EIF4E is also known to interact with other partners. In higher plants two isoforms of EIF4F have been identified, named isoform EIF4F and isoform EIF(iso)4F. Isoform EIF4F has subunits p220 and p26, whereas isoform EIF(iso)4F has subunits p82 and p28. Interacts directly with EXA1. In terms of assembly, (Microbial infection) Interacts with viral genome-linked protein (VPg); this interaction is possible in susceptible hosts but impaired in resistant plants. According to the redox status, the Cys-133-Cys-171 disulfide bridge may have a role in regulating protein function by affecting its ability to bind capped mRNA. Expressed in all tissues except in the cells of the specialization zone of the roots.

It localises to the nucleus. It is found in the cytoplasm. Component of the protein complex eIF4F, which is involved in the recognition of the mRNA cap, ATP-dependent unwinding of 5'-terminal secondary structure and recruitment of mRNA to the ribosome. Recognizes and binds the 7-methylguanosine-containing mRNA cap during an early step in the initiation of protein synthesis and facilitates ribosome binding by inducing the unwinding of the mRNAs secondary structures. Key component of recessive resistance to potyviruses. Its function is as follows. (Microbial infection) Susceptibility host factor required for viral infection by recruiting viral RNAs to the host ribosomal complex via an interaction with viral genome-linked protein (VPg). The polypeptide is Eukaryotic translation initiation factor 4E-1 (Arabidopsis thaliana (Mouse-ear cress)).